Consider the following 514-residue polypeptide: 6-phosphofructo-2-kinase/fructose-2,6-bisphosphatase 3 (514 aa).

The tract at residues 1-245 (MPLELTQSRV…VYYLMNIHVQ (245 aa)) is 6-phosphofructo-2-kinase. Residue 42-50 (GLPARGKTY) participates in ATP binding. Positions 75 and 99 each coordinate beta-D-fructose 6-phosphate. Residue Asp125 is part of the active site. Beta-D-fructose 6-phosphate-binding residues include Thr127 and Arg133. Cys155 is an active-site residue. 164-169 (NIMEVK) contributes to the ATP binding site. Residues Lys169, Arg190, and Tyr194 each coordinate beta-D-fructose 6-phosphate. Positions 246 to 514 (PRTIYLCRHG…QPLLGQACLT (269 aa)) are fructose-2,6-bisphosphatase. Arg253 contacts beta-D-fructose 2,6-bisphosphate. His254 serves as the catalytic Tele-phosphohistidine intermediate. The beta-D-fructose 2,6-bisphosphate site is built by Asn260 and Gly266. Residue Glu323 is the Proton donor/acceptor of the active site. Positions 334, 348, 352, 363, 389, and 393 each coordinate beta-D-fructose 2,6-bisphosphate. 345-348 (YALR) contacts ATP. ATP-binding positions include 389–393 (QAVLR) and Tyr425. The disordered stretch occupies residues 444 to 475 (ERSEDAKKGPNPLMRRNSVTPLASPEPTKKPR). Ser461 carries the post-translational modification Phosphoserine; by AMPK and PKA. Position 463 is a phosphothreonine (Thr463). Ser467 is modified (phosphoserine). At Thr471 the chain carries Phosphothreonine; by PKC.

It in the C-terminal section; belongs to the phosphoglycerate mutase family. As to quaternary structure, homodimer. Forms a heterodimer with PFKFB2. In terms of processing, phosphorylation by AMPK stimulates activity.

It catalyses the reaction beta-D-fructose 2,6-bisphosphate + H2O = beta-D-fructose 6-phosphate + phosphate. It carries out the reaction beta-D-fructose 6-phosphate + ATP = beta-D-fructose 2,6-bisphosphate + ADP + H(+). Functionally, catalyzes both the synthesis and degradation of fructose 2,6-bisphosphate. The protein is 6-phosphofructo-2-kinase/fructose-2,6-bisphosphatase 3 (PFKFB3) of Pongo abelii (Sumatran orangutan).